The sequence spans 166 residues: Thiol peroxidase (166 aa).

Residues 18 to 164 (VKVGDKAPNF…YEKAIEAAKA (147 aa)) form the Thioredoxin domain. Cys-60 acts as the Cysteine sulfenic acid (-SOH) intermediate in catalysis. Cysteines 60 and 94 form a disulfide.

The protein belongs to the peroxiredoxin family. Tpx subfamily. Homodimer.

The catalysed reaction is a hydroperoxide + [thioredoxin]-dithiol = an alcohol + [thioredoxin]-disulfide + H2O. Thiol-specific peroxidase that catalyzes the reduction of hydrogen peroxide and organic hydroperoxides to water and alcohols, respectively. Plays a role in cell protection against oxidative stress by detoxifying peroxides. This chain is Thiol peroxidase, found in Halalkalibacterium halodurans (strain ATCC BAA-125 / DSM 18197 / FERM 7344 / JCM 9153 / C-125) (Bacillus halodurans).